We begin with the raw amino-acid sequence, 299 residues long: MLTFQEIILKLQTYWGQQGCAILQPFDMEVGAGTSHPATCLRAIGPEPWNAAYVQPSRRPKDGRYGENPNRLQHYYQFQVALKPNPDNIQELYLGSLRELGIDPTVHDIRFVEDDWENPTLGAWGLGWEVWLNGMEVTQFTYFQQVGGIDCKPVLGEITYGIERLAMYLQGVENVYDLVWTVYPSGQVVTYGDVYHQNEVEQSTYNFEYANVPKLFELFSYYESEARRLLDVPLALPAYEMVLKAGHTFNLLDARGAISVTERAAYIGRVRTLSRGVAQAYYNAREALGFPMLKQDSAE.

It belongs to the class-II aminoacyl-tRNA synthetase family. In terms of assembly, tetramer of two alpha and two beta subunits.

The protein localises to the cytoplasm. The enzyme catalyses tRNA(Gly) + glycine + ATP = glycyl-tRNA(Gly) + AMP + diphosphate. The chain is Glycine--tRNA ligase alpha subunit from Laribacter hongkongensis (strain HLHK9).